A 362-amino-acid polypeptide reads, in one-letter code: 3-dehydroquinate synthase (362 aa).

NAD(+) is bound by residues 71–76, 105–109, 129–130, Lys142, and Lys151; these read DGEQYK, GVIGD, and TT. Glu184, His247, and His264 together coordinate Zn(2+).

It belongs to the sugar phosphate cyclases superfamily. Dehydroquinate synthase family. The cofactor is NAD(+). Co(2+) serves as cofactor. Zn(2+) is required as a cofactor.

It localises to the cytoplasm. It carries out the reaction 7-phospho-2-dehydro-3-deoxy-D-arabino-heptonate = 3-dehydroquinate + phosphate. The protein operates within metabolic intermediate biosynthesis; chorismate biosynthesis; chorismate from D-erythrose 4-phosphate and phosphoenolpyruvate: step 2/7. Its function is as follows. Catalyzes the conversion of 3-deoxy-D-arabino-heptulosonate 7-phosphate (DAHP) to dehydroquinate (DHQ). The protein is 3-dehydroquinate synthase of Haemophilus ducreyi (strain 35000HP / ATCC 700724).